A 90-amino-acid polypeptide reads, in one-letter code: Large ribosomal subunit protein eL34 (90 aa).

Residues cysteine 36, cysteine 39, cysteine 72, and cysteine 75 each coordinate Zn(2+). Residues 41-72 (RPLNGVPRGRPSELRKLPKTKKRPERPYPNLC) are disordered.

Belongs to the eukaryotic ribosomal protein eL34 family. Part of the 50S ribosomal subunit. Requires Zn(2+) as cofactor.

In Thermococcus kodakarensis (strain ATCC BAA-918 / JCM 12380 / KOD1) (Pyrococcus kodakaraensis (strain KOD1)), this protein is Large ribosomal subunit protein eL34.